The primary structure comprises 191 residues: UPF0312 protein Shewmr4_1178 (191 aa).

The signal sequence occupies residues 1–22 (MKKQLLAALIGGSLLAPMAASA).

This sequence belongs to the UPF0312 family. Type 1 subfamily.

Its subcellular location is the periplasm. This Shewanella sp. (strain MR-4) protein is UPF0312 protein Shewmr4_1178.